The following is a 406-amino-acid chain: Phosphatidylinositol 5-phosphate 4-kinase type-2 alpha (406 aa).

Ala2 is subject to N-acetylalanine. Phosphothreonine is present on Thr3. Ser14 carries the phosphoserine modification. The PIPK domain occupies Ala33 to Leu405. The tract at residues Val59–Asp65 is required for interaction with PIP5K1A. Residues Lys89 and Lys145 each carry the N6-acetyllysine modification. The disordered stretch occupies residues Glu287–Ala328. The segment covering Glu289–Ser304 has biased composition (acidic residues).

In terms of assembly, homodimer. Interacts with PIP4K2B; the interaction may regulate localization to the nucleus. Probably interacts with PIP5K1A; the interaction inhibits PIP5K1A kinase activity. Phosphorylated in tyrosines. Phosphorylation is induced by light and increases kinase activity.

The protein resides in the cell membrane. The protein localises to the nucleus. It is found in the lysosome. Its subcellular location is the cytoplasm. It localises to the photoreceptor inner segment. The protein resides in the cell projection. The protein localises to the cilium. It is found in the photoreceptor outer segment. It catalyses the reaction a 1,2-diacyl-sn-glycero-3-phospho-(1D-myo-inositol-5-phosphate) + ATP = a 1,2-diacyl-sn-glycero-3-phospho-(1D-myo-inositol-4,5-bisphosphate) + ADP + H(+). The enzyme catalyses 1,2-dihexadecanoyl-sn-glycero-3-phospho-(1D-myo-inositol-5-phosphate) + ATP = 1,2-dihexadecanoyl-sn-glycero-3-phospho-(1D-myo-inositol-4,5-bisphosphate) + ADP + H(+). It carries out the reaction 1,2-dihexadecanoyl-sn-glycero-3-phospho-(1D-myo-inositol-5-phosphate) + GTP = 1,2-dihexadecanoyl-sn-glycero-3-phospho-(1D-myo-inositol-4,5-bisphosphate) + GDP + H(+). In rod outer segments, activated by light. Functionally, catalyzes the phosphorylation of phosphatidylinositol 5-phosphate (PtdIns5P) on the fourth hydroxyl of the myo-inositol ring, to form phosphatidylinositol 4,5-bisphosphate (PtdIns(4,5)P2). Has both ATP- and GTP-dependent kinase activities. May exert its function by regulating the levels of PtdIns5P, which functions in the cytosol by increasing AKT activity and in the nucleus signals through ING2. May regulate the pool of cytosolic PtdIns5P in response to the activation of tyrosine phosphorylation. Required for lysosome-peroxisome membrane contacts and intracellular cholesterol transport through modulating peroxisomal PtdIns(4,5)P2 level. In collaboration with PIP4K2B, has a role in mediating autophagy in times of nutrient stress. Required for autophagosome-lysosome fusion and the regulation of cellular lipid metabolism. Negatively regulates insulin signaling through a catalytic-independent mechanism. PIP4Ks interact with PIP5Ks and suppress PIP5K-mediated PtdIns(4,5)P2 synthesis and insulin-dependent conversion to PtdIns(3,4,5)P3. May be involved in thrombopoiesis, and the terminal maturation of megakaryocytes and regulation of their size. In Rattus norvegicus (Rat), this protein is Phosphatidylinositol 5-phosphate 4-kinase type-2 alpha.